Here is a 3619-residue protein sequence, read N- to C-terminus: BEACH domain-containing protein lvsA (3619 aa).

Disordered regions lie at residues 1 to 117, 648 to 709, 1101 to 1129, 1367 to 1390, 1636 to 1658, 1893 to 1924, and 1964 to 1999; these read MFRR…NNNN, KIDD…EKEA, NNNN…NNDQ, SPNL…NSKK, IPTP…RKSI, SSIS…PTSG, and QQAA…NTPN. Residues 17 to 30 are compositionally biased toward pro residues; that stretch reads PQVPHSPGHPPHQP. Composition is skewed to low complexity over residues 31-59, 68-87, 97-117, 656-689, 1101-1127, 1375-1387, 1640-1652, and 1893-1923; these read PQQQ…QQPQ, SVSS…SFSS, EESS…NNNN, NNNN…NEEN, NNNN…NNNN, NNNN…GGSN, SSSS…SSTS, and SSIS…TPTS. One copy of the WD 1 repeat lies at 94 to 133; it reads SATEESSSINSNNNNNNNKNNNNNNNSNIIESNINVWTIM. The segment covering 1974 to 1986 has biased composition (polar residues); that stretch reads MSIQSSPFQSKNL. Residues 2234–2258 adopt a coiled-coil conformation; sequence VKILEKLEADRVGLQKTVQSLYKSL. The WD 2 repeat unit spans residues 2294-2335; it reads LDSDFMNAFCYPLYKLVISDQHEHVDNSIKLWRLLLSLKTSS. Disordered regions lie at residues 2403 to 2457 and 2596 to 2785; these read KKQH…ITKK and NTSS…SEDE. Residues 2440-2452 are compositionally biased toward basic and acidic residues; that stretch reads DRKDQSHQEEKSK. Residues 2596–2662 show a composition bias toward low complexity; that stretch reads NTSSITNNNN…TTTPQQSSSQ (67 aa). Polar residues-rich tracts occupy residues 2663-2687 and 2694-2725; these read IKVS…SSSE and KLQS…SEEN. Low complexity-rich tracts occupy residues 2726–2735 and 2742–2764; these read SSLTSASTTL and TQTT…TTTT. The BEACH-type PH domain maps to 2807–2932; that stretch reads KDPRLNGIMY…TRDEVYHTLV (126 aa). Positions 2940–2971 are disordered; that stretch reads TIGGDAQGITGGQTGNDDNDDHHGGGGGRGVR. Residues 2944–2953 are compositionally biased toward gly residues; it reads DAQGITGGQT. Residues 2959-2971 are compositionally biased toward basic and acidic residues; sequence DDHHGGGGGRGVR. The region spanning 2972-3270 is the BEACH domain; that stretch reads DRFTSIWRKS…QLFDKPHPKR (299 aa). WD repeat units follow at residues 3347–3386, 3389–3428, 3431–3471, 3474–3518, and 3563–3602; these read HHDG…LAKR, GHTG…YVRS, AHEG…NYKT, IAND…LPDN, and SHST…QVKQ. The tract at residues 3516–3539 is disordered; that stretch reads PDNNNSNNNNNNNNNNNNNATQIP. Low complexity predominate over residues 3518–3534; sequence NNNSNNNNNNNNNNNNN.

It localises to the contractile vacuole membrane. In terms of biological role, involved in myosin-independent cytokinesis and early steps of phagocytosis. Also involved in contractile vacuole-mediated osmoregulation. This is BEACH domain-containing protein lvsA (lvsA) from Dictyostelium discoideum (Social amoeba).